A 1448-amino-acid polypeptide reads, in one-letter code: MNSLLNNLIIDYEYDLIKVHHHIQKNIFIFPFKKQHYHSTVLECLINLCSKLKYDENENLNSLDQFKIIFYNESKFLNKNLKEYLEILKNSKEINKHVICDYFEKDNNGSEEKNQNSSIVFNFLNCFKDYLSMDIIEFIVRGISFQVRSYCNLIKPIEQWKQKTYQQRYQQFKKALHLNNEVYKRIVCNGVWKSEKLDYIYRYKSDQLSLVGIIESDCSDLFISTLLIDSNSYEQLENVWRLICNFDSFSIASKFLIEFFKLDKVNNKLNFSIHPSSDANENYKRTKTSTNSNLSIDLVRLLEFTTTNFSINVAKLLISKFPTFITSIPSRNSLWGIESRSSLNPIENHFRILNCSFDFNNHQIPIDKQKDYINLFTKNLIHFNTEINEIEDLILKERYHISIRSINNNNHDDDDYDDYDDDDDHHSGCNNNNNNNNDGDHNEDENSIKEESLIEFSNYKVDSMISRLLKYNAPSTTIIALLSNLVCNHMGVSQRILILSTLIEEIQMIESLLVQNDSFKTFMLCESMVSTPNRWSKQSIPLVFFAYIGSDILNLKERPMFYKFFDLNPRLLLSIIPVPLIFKTFLSCSDIIRNNFEDDLINFEDDDSSSVNFFGFTSNFSNSDQDYLSALETCFENSNVFNDQQLKQMARKLLTFSKRENQSRIAESELLEELELEEKRKKQKQQEKIKKRLKREKRLKEKQDLLLIKLEKQKEKQLEEQMKKREKKLQKLERKRLYKKLQDDEKQKLIEKQKQKEKEKELSKQKEKEFELLKQKEIDEIKQKSIQEIDEINKNIQQNQLKIDEINKKLEIKEIQNFQLPLLNQQQQQPPPLQLLKQQQQQPSSSLTIQLESITPILEPKNDNVVLLKSSIETPIDSVKKIQSIIEIQLEEENQKKKEMETIDEYEEININKKQINSNMKWGGIGEPSWISVKKDNKKSKSTITTSTTPTTTTPAKVITSQFKNEQTKKLIIENNKKQNLINDNNNNNNNNNNNNNNNNNNNNNNKLNNIIQDEDFVSIGKFKFNRNESNILGRGSNGTLVFKGLWSDKIPVAIKQMQKAFNPLINKEVEALISLTSKNCSNMIRYIDKEEDKLHVYLGLTLCDGSLQNLVESGKLNDFVISSNKSIIELAKDILFGIQFLHSHDIVHNDLNPRNILTLIGKTSNNNNSSNNSFIISDLGLSKMEVESSYSFTSNIPTGQGGYHPFEVLQSKRMTKSVDIFSLGCILFYLLTNGQHPFGNDKLFRIVNIISNKMNLTPLNSNQLACTLIKSMISKDESIRPTIQNVLNHPLFWNLEKKIQFIDAALNLIKEPSNSSYNSKLTKQLNHCDDNDEPFLNDSWNHLIDVTNLLTPTKGSKITISYQYDKVRDLIRFIRNTIAHHKEIKRAIIQQFQNQQSRPNLEVLEYLSSQDSILLYFESKIPNLIHHIYQQLKQYSLTIDYLFNFYN.

Residues 412-423 (DDDDYDDYDDDD) are compositionally biased toward acidic residues. A disordered region spans residues 412–446 (DDDDYDDYDDDDDHHSGCNNNNNNNNDGDHNEDEN). Over residues 428-437 (GCNNNNNNNN) the composition is skewed to low complexity. Coiled-coil stretches lie at residues 666-817 (AESE…EIQN), 887-921 (EIQLEEENQKKKEMETIDEYEEININKKQINSNMK), and 974-1016 (ENNK…QDED). The segment at 975-1008 (NNKKQNLINDNNNNNNNNNNNNNNNNNNNNNNKL) is disordered. The span at 978–1008 (KQNLINDNNNNNNNNNNNNNNNNNNNNNNKL) shows a compositional bias: low complexity. The Protein kinase domain occupies 1027–1293 (RNESNILGRG…IQNVLNHPLF (267 aa)). ATP contacts are provided by residues 1033 to 1041 (LGRGSNGTL) and lysine 1056. The Proton acceptor role is filled by aspartate 1151. The KEN domain occupies 1296-1448 (LEKKIQFIDA…TIDYLFNFYN (153 aa)).

Belongs to the protein kinase superfamily. Ser/Thr protein kinase family.

It carries out the reaction L-seryl-[protein] + ATP = O-phospho-L-seryl-[protein] + ADP + H(+). The catalysed reaction is L-threonyl-[protein] + ATP = O-phospho-L-threonyl-[protein] + ADP + H(+). This is Probable serine/threonine-protein kinase irlB (irlB-1) from Dictyostelium discoideum (Social amoeba).